A 523-amino-acid chain; its full sequence is GMP synthase [glutamine-hydrolyzing] (523 aa).

One can recognise a Glutamine amidotransferase type-1 domain in the interval 8–205 (RILILDFGSQ…IRELCECEAL (198 aa)). Cysteine 85 (nucleophile) is an active-site residue. Catalysis depends on residues histidine 179 and glutamate 181. The region spanning 206-398 (WTPSNIISDA…LGLPYDMVYR (193 aa)) is the GMPS ATP-PPase domain. Position 233–239 (233–239 (SGGVDSS)) interacts with ATP.

In terms of assembly, homodimer.

The catalysed reaction is XMP + L-glutamine + ATP + H2O = GMP + L-glutamate + AMP + diphosphate + 2 H(+). It participates in purine metabolism; GMP biosynthesis; GMP from XMP (L-Gln route): step 1/1. Catalyzes the synthesis of GMP from XMP. In Alcanivorax borkumensis (strain ATCC 700651 / DSM 11573 / NCIMB 13689 / SK2), this protein is GMP synthase [glutamine-hydrolyzing].